The chain runs to 293 residues: Pyridoxal 5'-phosphate synthase subunit PdxS (293 aa).

Residue aspartate 23 participates in D-ribose 5-phosphate binding. Lysine 80 serves as the catalytic Schiff-base intermediate with D-ribose 5-phosphate. Glycine 152 is a D-ribose 5-phosphate binding site. Position 164 (arginine 164) interacts with D-glyceraldehyde 3-phosphate. Residues glycine 213 and 234 to 235 contribute to the D-ribose 5-phosphate site; that span reads GS.

The protein belongs to the PdxS/SNZ family. In terms of assembly, in the presence of PdxT, forms a dodecamer of heterodimers.

It carries out the reaction aldehydo-D-ribose 5-phosphate + D-glyceraldehyde 3-phosphate + L-glutamine = pyridoxal 5'-phosphate + L-glutamate + phosphate + 3 H2O + H(+). The protein operates within cofactor biosynthesis; pyridoxal 5'-phosphate biosynthesis. Its function is as follows. Catalyzes the formation of pyridoxal 5'-phosphate from ribose 5-phosphate (RBP), glyceraldehyde 3-phosphate (G3P) and ammonia. The ammonia is provided by the PdxT subunit. Can also use ribulose 5-phosphate and dihydroxyacetone phosphate as substrates, resulting from enzyme-catalyzed isomerization of RBP and G3P, respectively. The sequence is that of Pyridoxal 5'-phosphate synthase subunit PdxS from Thermus thermophilus (strain ATCC 27634 / DSM 579 / HB8).